We begin with the raw amino-acid sequence, 1031 residues long: Translation initiation factor IF-2 (1031 aa).

2 disordered regions span residues 33–369 (KSHS…GDVL) and 388–436 (LKPL…AESL). Basic and acidic residues predominate over residues 45–56 (ELVRSKLSEPRV). Positions 96–105 (PAPAQQQAAA) are enriched in low complexity. The segment covering 108–123 (ASSSKPSPQRPDQLSS) has biased composition (polar residues). Low complexity predominate over residues 148-171 (PAAQEPQPAAASTRPEAAAKAGSP). Residues 184–200 (VLPPPRRAASGPEPPQR) show a composition bias toward pro residues. The segment covering 250 to 281 (TRPEPRSPVAKKEESSDSGKADEAPRPQRRLE) has biased composition (basic and acidic residues). Residues 286–299 (PTRPVAKPLPPEPD) are compositionally biased toward pro residues. A compositionally biased stretch (low complexity) spans 419–435 (RPSASAEATAPEAAAES). Residues 522–695 (PRPPVVTIMG…LLVADVAELQ (174 aa)) enclose the tr-type G domain. Residues 531–538 (GHVDHGKT) are G1. Position 531-538 (531-538 (GHVDHGKT)) interacts with GTP. The segment at 556–560 (GITQR) is G2. A G3 region spans residues 581 to 584 (DTPG). Residues 581 to 585 (DTPGH) and 635 to 638 (NKID) contribute to the GTP site. The G4 stretch occupies residues 635-638 (NKID). A G5 region spans residues 671-673 (SAL).

Belongs to the TRAFAC class translation factor GTPase superfamily. Classic translation factor GTPase family. IF-2 subfamily.

The protein resides in the cytoplasm. Functionally, one of the essential components for the initiation of protein synthesis. Protects formylmethionyl-tRNA from spontaneous hydrolysis and promotes its binding to the 30S ribosomal subunits. Also involved in the hydrolysis of GTP during the formation of the 70S ribosomal complex. The protein is Translation initiation factor IF-2 of Synechococcus sp. (strain JA-3-3Ab) (Cyanobacteria bacterium Yellowstone A-Prime).